A 301-amino-acid chain; its full sequence is Acetylglutamate kinase (301 aa).

Substrate-binding positions include 68–69 (GG), Arg-90, and Asn-197.

Belongs to the acetylglutamate kinase family. ArgB subfamily.

The protein localises to the cytoplasm. It catalyses the reaction N-acetyl-L-glutamate + ATP = N-acetyl-L-glutamyl 5-phosphate + ADP. The protein operates within amino-acid biosynthesis; L-arginine biosynthesis; N(2)-acetyl-L-ornithine from L-glutamate: step 2/4. Its function is as follows. Catalyzes the ATP-dependent phosphorylation of N-acetyl-L-glutamate. The protein is Acetylglutamate kinase of Nitrosococcus oceani (strain ATCC 19707 / BCRC 17464 / JCM 30415 / NCIMB 11848 / C-107).